A 912-amino-acid polypeptide reads, in one-letter code: MASAVSERLFSLELLVDWVCLEAGLPQPPVVAEEEQKEEGEGASPPRPSRSLCPAVAFRLLDFPTLLIYPPAGPAAPAQESRPGLVSFRRGKSCLFRLQPATLHRLLLRTPLYTLLLQLPPGHPTPAPQLLGACSISLAAAVHKVLGFAAPGSSQSHRGSFPLCNRDGERIGDIALGYRLSDLGSSLLGHLERPVASPGGGVEGMEVQKSVEVSPQTWQENQQLQQPDSEPSPGDADKPLVDVKISRAGKDLKGRAFHSKADSDYTDSMENGKTNSDMCSKGSSERSVSPPNQEGTEVELETNIICPPPLYYTHLTQEKTPPKQGKITIEPQINASEEWDDGTFLKENVNPPTHTNPPEHTNSATGESCSVLINPASVQDTGASNQTTDHPPTEQNRINTIRQLPLLNALLVELSLLYNQPMANPTHIHPHLAWLYRTEDKKSPESSVKSTCKSESKKDKLSVGENEKSVSLQYKKNQTENLKKGKYFEKKGGAPQKRVSRGKLLYGLTNTLKLRLKQTNPDMLVEYEKKEQYKKMQTQMLGAKLRIPSSKVKILSFAELYQKPHELPKDKCLESDASFAENSNTSKQISVVVDDPSTTTETKLNCATEKTVDCDENRSNNGFLGEILSPANSVVSERFICTNTLEGKVFGRKSIQSPGVFQQVAVVDRTVVDKEIDDKQVKITGDDILTVDINEKNPSTSSCSESISELKYSDDFTSPCSSEDTSRILRACDSSPGTENPKNSQHTSTSSETRLSIRKNSSAKSSILSPPFSAGSPVLSHKRFPVSKTQDKSLEEASSSDFSSSQWTEEKENQRDQNSMHNSKVIKQDHDISAKPKTRTGCKSSEKSQSPRTSQVSSYLPSNLSELELNVLDCSTLDHFEEDCDDLGSLNISKQCKDICELVINKLPGYTV.

6 disordered regions span residues 31-50 (VAEEEQKEEGEGASPPRPSR), 209-239 (KSVEVSPQTWQENQQLQQPDSEPSPGDADKP), 254-296 (GRAF…QEGT), 335-366 (ASEEWDDGTFLKENVNPPTHTNPPEHTNSATG), 443-469 (SPESSVKSTCKSESKKDKLSVGENEKS), and 730-859 (RACD…VSSY). A compositionally biased stretch (polar residues) spans 211–229 (VEVSPQTWQENQQLQQPDS). Residues 254–263 (GRAFHSKADS) show a composition bias toward basic and acidic residues. Positions 266-295 (TDSMENGKTNSDMCSKGSSERSVSPPNQEG) are enriched in polar residues. A compositionally biased stretch (low complexity) spans 347–362 (ENVNPPTHTNPPEHTN). Basic and acidic residues predominate over residues 452–468 (CKSESKKDKLSVGENEK). Residues 735 to 768 (SPGTENPKNSQHTSTSSETRLSIRKNSSAKSSIL) are compositionally biased toward polar residues. Positions 796-807 (EASSSDFSSSQW) are enriched in low complexity. The segment covering 841 to 859 (GCKSSEKSQSPRTSQVSSY) has biased composition (polar residues).

As to quaternary structure, interacts (via middle region) with microtubules.

Its subcellular location is the cytoplasm. The protein localises to the cytoskeleton. It is found in the spindle pole. It localises to the microtubule organizing center. The protein resides in the centrosome. Its subcellular location is the midbody. Microtubule-associated protein (MAP) that plays a role in the regulation of cell division; promotes microtubule stability and participates in the organization of the spindle midzone and normal progress of cytokinesis. The protein is Microtubule-associated protein 10 (MAP10) of Bos taurus (Bovine).